The primary structure comprises 380 residues: S-phase entry cyclin-6 (380 aa).

The segment at Pro-63–Glu-91 is disordered.

Belongs to the cyclin family. Cyclin AB subfamily.

Involved in G1/S and or S phase progression. Interacts with CDC28. This chain is S-phase entry cyclin-6 (CLB6), found in Saccharomyces cerevisiae (strain ATCC 204508 / S288c) (Baker's yeast).